A 215-amino-acid chain; its full sequence is Cytochrome b6 (215 aa).

The helical transmembrane segment at 32–52 (IFYCIGGIVFTSFLIQVASGF) threads the bilayer. Cys-35 contributes to the heme c binding site. Residues His-86 and His-100 each coordinate heme b. The next 3 helical transmembrane spans lie at 90–110 (ASMM…TGGF), 116–136 (LTWV…VTGY), and 186–206 (LHTF…FLMI). Heme b contacts are provided by His-187 and His-202.

Belongs to the cytochrome b family. PetB subfamily. The 4 large subunits of the cytochrome b6-f complex are cytochrome b6, subunit IV (17 kDa polypeptide, PetD), cytochrome f and the Rieske protein, while the 4 small subunits are PetG, PetL, PetM and PetN. The complex functions as a dimer. The cofactor is heme b. It depends on heme c as a cofactor.

Its subcellular location is the plastid. It is found in the chloroplast thylakoid membrane. Functionally, component of the cytochrome b6-f complex, which mediates electron transfer between photosystem II (PSII) and photosystem I (PSI), cyclic electron flow around PSI, and state transitions. This Gracilaria tenuistipitata var. liui (Red alga) protein is Cytochrome b6.